The sequence spans 255 residues: Putative esterase YitV (255 aa).

The sequence is that of Putative esterase YitV (yitV) from Bacillus subtilis (strain 168).